The chain runs to 119 residues: Basic phospholipase A2 notexin (119 aa).

7 disulfide bridges follow: C11/C71, C27/C118, C29/C45, C44/C99, C51/C92, C60/C85, and C78/C90. Ca(2+) is bound by residues Y28, G30, and G32. H48 is a catalytic residue. Residue D49 coordinates Ca(2+). D93 is a catalytic residue.

The protein belongs to the phospholipase A2 family. Group I subfamily. D49 sub-subfamily. As to quaternary structure, monomer. Ca(2+) is required as a cofactor. As to expression, expressed by the venom gland.

It is found in the secreted. The catalysed reaction is a 1,2-diacyl-sn-glycero-3-phosphocholine + H2O = a 1-acyl-sn-glycero-3-phosphocholine + a fatty acid + H(+). In terms of biological role, snake venom phospholipase A2 (PLA2) that inhibits neuromuscular transmission by blocking acetylcholine release from the nerve termini. Is directly toxic to skeletal muscle upon local application in vivo (dystrophic effect). Also has direct nephrotoxicity in experimental mice; a single subcutaneous dose (1.38 ug/kg) produces renal tubular and glomerular damage within 24 hours. PLA2 catalyzes the calcium-dependent hydrolysis of the 2-acyl groups in 3-sn-phosphoglycerides. This Notechis scutatus scutatus (Mainland tiger snake) protein is Basic phospholipase A2 notexin.